The sequence spans 301 residues: Ribonuclease Z (301 aa).

Residues His-60, His-62, Asp-64, His-65, His-137, Asp-207, and His-265 each coordinate Zn(2+). Asp-64 (proton acceptor) is an active-site residue.

It belongs to the RNase Z family. In terms of assembly, homodimer. Zn(2+) is required as a cofactor.

The catalysed reaction is Endonucleolytic cleavage of RNA, removing extra 3' nucleotides from tRNA precursor, generating 3' termini of tRNAs. A 3'-hydroxy group is left at the tRNA terminus and a 5'-phosphoryl group is left at the trailer molecule.. Its function is as follows. Zinc phosphodiesterase, which displays some tRNA 3'-processing endonuclease activity. Probably involved in tRNA maturation, by removing a 3'-trailer from precursor tRNA. In Exiguobacterium sp. (strain ATCC BAA-1283 / AT1b), this protein is Ribonuclease Z.